Consider the following 374-residue polypeptide: o-succinylbenzoate synthase (374 aa).

Lys-164 acts as the Proton donor in catalysis. Residues Asp-189, Glu-214, and Asp-239 each contribute to the Mg(2+) site. The Proton acceptor role is filled by Lys-263.

The protein belongs to the mandelate racemase/muconate lactonizing enzyme family. MenC type 2 subfamily. Homodimer. A divalent metal cation serves as cofactor.

The enzyme catalyses (1R,6R)-6-hydroxy-2-succinyl-cyclohexa-2,4-diene-1-carboxylate = 2-succinylbenzoate + H2O. Its pathway is quinol/quinone metabolism; 1,4-dihydroxy-2-naphthoate biosynthesis; 1,4-dihydroxy-2-naphthoate from chorismate: step 4/7. It functions in the pathway quinol/quinone metabolism; menaquinone biosynthesis. Functionally, converts 2-succinyl-6-hydroxy-2,4-cyclohexadiene-1-carboxylate (SHCHC) to 2-succinylbenzoate (OSB). Also acts as a N-succinylamino acid racemase (NSAR) that catalyzes the racemization of N-succinyl-L-phenylglycine. L.innocua has the menaquinone synthesis pathway, indicating that the species requires OSBS activity. However, the NSAR/OSBS is not encoded in the menaquinone operon, raising the possibility that both NSAR and OSBS are biological functions. In Listeria innocua serovar 6a (strain ATCC BAA-680 / CLIP 11262), this protein is o-succinylbenzoate synthase.